The primary structure comprises 755 residues: Protein phosphatase 1E (755 aa).

The disordered stretch occupies residues 21 to 131; sequence EFRGPCGGGE…PPLPPLPRPL (111 aa). Repeat copies occupy residues 31-32, 33-34, 35-36, 37-38, 39-40, 41-42, and 43-44. The interval 31 to 52 is 11 X 2 AA tandem repeats of P-E; it reads PEPEPEPEPEPEPESEPEPEPE. 2 stretches are compositionally biased toward acidic residues: residues 31 to 68 and 77 to 101; these read PEPE…EPGE and EEGD…EEEG. The stretch at 45–46 is one 8; approximate repeat; that stretch reads SE. Tandem repeats lie at residues 47-48, 49-50, and 51-52. The segment covering 102–113 has biased composition (low complexity); sequence AATAAAAPGHSA. The span at 114 to 129 shows a compositional bias: pro residues; sequence VPPPPPQLPPLPPLPR. One can recognise a PPM-type phosphatase domain in the interval 231–488; the sequence is ETSIHAIKNM…DNITVIVVFL (258 aa). Residues D273, G274, D435, and D479 each coordinate Mn(2+). The disordered stretch occupies residues 498 to 537; the sequence is SEESDWTENSFQGGQEDGGDDKENHGECKRPWPQHQCSAP. Residues 518-527 are compositionally biased toward basic and acidic residues; the sequence is DKENHGECKR. Phosphoserine is present on residues S535 and S548.

It belongs to the PP2C family. In terms of assembly, heterotrimer. Interacts with PAX1 and ARHGEF6 (or ARHGEF7). The cofactor is Mg(2+). It depends on Mn(2+) as a cofactor.

It is found in the nucleus. It localises to the cytoplasm. The enzyme catalyses O-phospho-L-seryl-[protein] + H2O = L-seryl-[protein] + phosphate. It carries out the reaction O-phospho-L-threonyl-[protein] + H2O = L-threonyl-[protein] + phosphate. Its function is as follows. Protein phosphatase that inactivates multifunctional CaM kinases such as CAMK4 and CAMK2. Dephosphorylates and inactivates PAK. May play a role in the inhibition of actin fiber stress breakdown and in morphological changes driven by TNK2/CDC42. Dephosphorylates PRKAA2. The chain is Protein phosphatase 1E (PPM1E) from Homo sapiens (Human).